A 522-amino-acid polypeptide reads, in one-letter code: Tubulin-specific chaperone E (522 aa).

One can recognise a CAP-Gly domain in the interval 27–71; sequence GNVPPTPGLWLGVEWDNHLRGKHNGTHEGTKYFTCSHPTGGSFIR. LRR repeat units follow at residues 149–170, 175–196, 201–222, 226–248, 249–270, 274–295, and 303–324; these read NIMT…AHIS, NLTS…SSLA, NLKV…QCAS, ALEE…NNLQ, NLTI…HTIA, RLKQ…DVDF, and SLTS…NELH. The region spanning 337 to 379 is the LRRCT domain; sequence NPLMDLDKNPETVRQLIIAKIENLKFLNKTEIFPTERRGAELD.

Belongs to the TBCE family. In terms of assembly, supercomplex made of cofactors A to E. Cofactors A and D function by capturing and stabilizing tubulin in a quasi-native conformation. Cofactor E binds to the cofactor D-tubulin complex; interaction with cofactor C then causes the release of tubulin polypeptides that are committed to the native state.

Its subcellular location is the cytoplasm. The protein resides in the cytoskeleton. Its function is as follows. Tubulin-folding protein; involved in the second step of the tubulin folding pathway. In Xenopus laevis (African clawed frog), this protein is Tubulin-specific chaperone E (tbce).